The chain runs to 138 residues: Nucleoside diphosphate kinase (138 aa).

ATP is bound by residues Lys-9, Phe-57, Arg-85, Thr-91, Arg-102, and Asn-112. His-120 serves as the catalytic Pros-phosphohistidine intermediate.

Belongs to the NDK family. In terms of assembly, homotetramer. The cofactor is Mg(2+).

The protein localises to the cytoplasm. The enzyme catalyses a 2'-deoxyribonucleoside 5'-diphosphate + ATP = a 2'-deoxyribonucleoside 5'-triphosphate + ADP. It catalyses the reaction a ribonucleoside 5'-diphosphate + ATP = a ribonucleoside 5'-triphosphate + ADP. Major role in the synthesis of nucleoside triphosphates other than ATP. The ATP gamma phosphate is transferred to the NDP beta phosphate via a ping-pong mechanism, using a phosphorylated active-site intermediate. The polypeptide is Nucleoside diphosphate kinase (Streptococcus agalactiae serotype III (strain NEM316)).